The chain runs to 485 residues: Alginate biosynthesis protein AlgA (485 aa).

Belongs to the mannose-6-phosphate isomerase type 2 family. Monomer. It depends on Co(2+) as a cofactor.

It carries out the reaction D-mannose 6-phosphate = D-fructose 6-phosphate. It catalyses the reaction alpha-D-mannose 1-phosphate + GTP + H(+) = GDP-alpha-D-mannose + diphosphate. It participates in nucleotide-sugar biosynthesis; GDP-alpha-D-mannose biosynthesis; GDP-alpha-D-mannose from alpha-D-mannose 1-phosphate (GTP route): step 1/1. The protein operates within nucleotide-sugar biosynthesis; GDP-alpha-D-mannose biosynthesis; alpha-D-mannose 1-phosphate from D-fructose 6-phosphate: step 1/2. Its function is as follows. Produces a precursor for alginate polymerization. The alginate layer provides a protective barrier against host immune defenses and antibiotics. The chain is Alginate biosynthesis protein AlgA (algA) from Pseudomonas putida (strain ATCC 47054 / DSM 6125 / CFBP 8728 / NCIMB 11950 / KT2440).